The sequence spans 238 residues: MRFDIVTLFPDCFNSVLNSGLLGKALAKQIAEVHLVNPRDFTTDKHRKVDDEPYGGGVGMLMKPEPIFTAVESLPVLPRREIILMSPQGQTINQSLLKELVTNYDQLVVICGHYEGVDERVLHLVTREVSLGDFILTGGEIPAMALINGVVRLIPGTVAKTESLTAESFEEGLLDYPQYTRPANFRGLKVPDVLLSGNHAAIAQWRYEQQIQKTRDRRPDLLEKLEQGKQGSRGAGGE.

S-adenosyl-L-methionine contacts are provided by residues G112 and 131-136 (LGDFIL).

This sequence belongs to the RNA methyltransferase TrmD family. Homodimer.

It is found in the cytoplasm. The catalysed reaction is guanosine(37) in tRNA + S-adenosyl-L-methionine = N(1)-methylguanosine(37) in tRNA + S-adenosyl-L-homocysteine + H(+). Its function is as follows. Specifically methylates guanosine-37 in various tRNAs. In Nostoc punctiforme (strain ATCC 29133 / PCC 73102), this protein is tRNA (guanine-N(1)-)-methyltransferase.